Consider the following 271-residue polypeptide: Thymidine kinase (271 aa).

ATP is bound by residues 74–81 (GPMFAGKT) and 152–155 (DEAQ). Catalysis depends on Glu-153, which acts as the Proton acceptor. Substrate is bound at residue Tyr-184. Cys-209 and Cys-212 together coordinate Zn(2+). Tyr-237 is a substrate binding site. Cys-241 provides a ligand contact to Zn(2+).

Belongs to the thymidine kinase family.

It catalyses the reaction thymidine + ATP = dTMP + ADP + H(+). This Oryza sativa subsp. japonica (Rice) protein is Thymidine kinase (TK).